The sequence spans 267 residues: Interleukin-1 beta (267 aa).

The propeptide occupies Met1–Asp115.

Belongs to the IL-1 family. Monomer. In its precursor form, weakly interacts with full-length MEFV; the mature cytokine does not interact at all. Interacts with integrins ITGAV:ITGBV and ITGA5:ITGB1; integrin-binding is required for IL1B signaling. Interacts with cargo receptor TMED10; the interaction is direct and is required for the secretion of IL1B mature form. Interacts with HSP90AB1; the interaction facilitates cargo translocation into the ERGIC. Interacts with HSP90B1; the interaction facilitates cargo translocation into the ERGIC.

The protein resides in the cytoplasm. It is found in the cytosol. The protein localises to the secreted. Its subcellular location is the lysosome. It localises to the extracellular exosome. Functionally, potent pro-inflammatory cytokine. Initially discovered as the major endogenous pyrogen, induces prostaglandin synthesis, neutrophil influx and activation, T-cell activation and cytokine production, B-cell activation and antibody production, and fibroblast proliferation and collagen production. Promotes Th17 differentiation of T-cells. Synergizes with IL12/interleukin-12 to induce IFNG synthesis from T-helper 1 (Th1) cells. Plays a role in angiogenesis by inducing VEGF production synergistically with TNF and IL6. Involved in transduction of inflammation downstream of pyroptosis: its mature form is specifically released in the extracellular milieu by passing through the gasdermin-D (GSDMD) pore. This is Interleukin-1 beta (IL1B) from Felis catus (Cat).